Consider the following 175-residue polypeptide: Ribosome maturation factor RimM (175 aa).

A PRC barrel domain is found at 95–175 (SEDEFYWREL…RIEVDWDPGF (81 aa)).

Belongs to the RimM family. In terms of assembly, binds ribosomal protein uS19.

The protein localises to the cytoplasm. Its function is as follows. An accessory protein needed during the final step in the assembly of 30S ribosomal subunit, possibly for assembly of the head region. Essential for efficient processing of 16S rRNA. May be needed both before and after RbfA during the maturation of 16S rRNA. It has affinity for free ribosomal 30S subunits but not for 70S ribosomes. The protein is Ribosome maturation factor RimM of Aliivibrio salmonicida (strain LFI1238) (Vibrio salmonicida (strain LFI1238)).